A 493-amino-acid chain; its full sequence is 3-octaprenyl-4-hydroxybenzoate carboxy-lyase (493 aa).

Mn(2+) is bound at residue Asn-175. Prenylated FMN-binding positions include 178–180, 192–194, and 197–198; these read IYR, RWL, and RG. Glu-241 is a binding site for Mn(2+). Residue Asp-290 is the Proton donor of the active site.

It belongs to the UbiD family. Homohexamer. Prenylated FMN is required as a cofactor. The cofactor is Mn(2+).

Its subcellular location is the cell membrane. It carries out the reaction a 4-hydroxy-3-(all-trans-polyprenyl)benzoate + H(+) = a 2-(all-trans-polyprenyl)phenol + CO2. It participates in cofactor biosynthesis; ubiquinone biosynthesis. In terms of biological role, catalyzes the decarboxylation of 3-octaprenyl-4-hydroxy benzoate to 2-octaprenylphenol, an intermediate step in ubiquinone biosynthesis. This is 3-octaprenyl-4-hydroxybenzoate carboxy-lyase from Photorhabdus laumondii subsp. laumondii (strain DSM 15139 / CIP 105565 / TT01) (Photorhabdus luminescens subsp. laumondii).